A 520-amino-acid chain; its full sequence is Sodium-dependent dicarboxylate transporter SdcS (520 aa).

14 helical membrane passes run 30-50 (AGQLIGLILGPLLFLLTLLFF), 55-75 (LPWKGVYVLAITLWIATWWIT), 77-97 (AIPIAATSLLPIVLLPLGHIL), 104-124 (SEYGNDIIFLFLGGFILAIAM), 160-180 (SMFVSNTAAVMIMIPIGLAII), 207-227 (IGYAGTIGGLGTLIGTPPLII), 242-262 (FAKWMIVGIPTVIVLLGITWL), 298-318 (KVVQTIFVLASLLWITREFLL), 323-343 (VTSSVADGTIAIFISILLFVI), 362-382 (ELPWGVLILFGGGLALAKGIS), 399-419 (GVSPILIVIVITIFVLFLTEV), 428-448 (MILPILATLSVAVGVHPLLLM), 452-472 (AMAANCAYMLPVGTPPNAIIF), and 491-511 (LISAIIIILVVYYVMPIVLGI).

It belongs to the SLC13A/DASS transporter (TC 2.A.47) family. NADC subfamily.

It is found in the cell membrane. Mediates the transport of the dicarboxylates fumarate, malate, and succinate across the cytoplasmic membrane via a Na(+)-electrochemical gradient. This is Sodium-dependent dicarboxylate transporter SdcS (sdcS) from Staphylococcus aureus (strain MSSA476).